Here is a 423-residue protein sequence, read N- to C-terminus: MKAELIAVGTEILTGQIVNTNAQFLSEKMAELGIDVYFQTAVGDNEERLLSVITTASQRSDLVILCGGLGPTKDDLTKQTLAKYLRRDLVYDEQACQKLDDFFAKRKPSSRTPNNERQAQVIEGSIPLPNKTGLAVGGFITVDGISYVVLPGPPSELKPMVNEELVPLLSKQYSTLYSKVLRFFGIGESQLVTVLSDFIENQTDPTIAPYAKTGEVTLRLSTKTENQALADKKLGQLEAQLLSRKTLEGQPLADVFYGYGEDNSLARETFELLVKYDKSITAAESLTAGLFQSTLASFPGASQVFNGGFVTYSMEEKAKMLGLPLEELKSHGVVSAYTAEGMAEQARLLTGADIGVSLTGVAGPDMLEEQPAGTVFIGLATQNKVESIKVLISGRSRLDVCYIATLHAFNMVRKTLLKLENLL.

This sequence belongs to the CinA family.

The sequence is that of Putative competence-damage inducible protein from Streptococcus pyogenes serotype M3 (strain ATCC BAA-595 / MGAS315).